The following is a 630-amino-acid chain: Kelch-like protein 14 (630 aa).

Residues 33 to 153 enclose the BTB domain; that stretch reads CDVTLTAQGQ…LYTANVTLSL (121 aa). The disordered stretch occupies residues 69–117; that stretch reads GGGVGGQDGLGAPKDQQQQQQPQQQPPQQQQPPPQEEPGTPSSSPDDKL. A compositionally biased stretch (low complexity) spans 84 to 96; that stretch reads QQQQQQPQQQPPQ. In terms of domain architecture, BACK spans 212–281; sequence VEDVLLLNFE…PAPELVERVQ (70 aa). Kelch repeat units lie at residues 325–374, 375–426, 427–473, 475–520, 522–572, and 574–622; these read MLLL…EVEN, FLFV…RLDK, HLYV…VHNG, IYIS…VMND, LYAI…VLDD, and IYLV…TVIL.

In terms of assembly, interacts with TOR1A. As to expression, expressed in the brain, primarily in neurons. In the cerebral cortex, mostly expressed in layers I and II (at protein level). Also observed in some neurons of the corpus striatum (at protein level). Expressed at high levels in the hippocampus, including in pyramidal cells of the CA1 and CA3 layers (at protein level). In the cerebellum, expression in Purkinje cells is higher than in granular cells (at protein level). Also detected in the medial septum, ventral pallidum, thalamus, hypothalamus, amygdala, inferior colliculi, locus caeruleus, peripyramidal nucleus, raphe nucleus, reticular formation, spinal trigeminal nucleus, and vestibular nuclei (at protein level). Low expression, if any, in glial cells (at protein level). Not observed in the corpus callosum.

Its subcellular location is the cytoplasm. The protein resides in the cytosol. It is found in the endoplasmic reticulum membrane. The protein is Kelch-like protein 14 (Klhl14) of Mus musculus (Mouse).